We begin with the raw amino-acid sequence, 348 residues long: MSDRLTLLRPDDWHIHLRDGAVLPHTVGDVARTFARAIIMPNLVPPVRTANEAGAYRERILAARPAGSRFEPLMVLYLTDNISPEDIRAAKASGFVYAAKLYPAGATTNSDSGVTSIDNIFPAIEAMAEVGMPLLVHGEVTRSEIDVFDREKRFIDEHMRRVVERFPTLKVVFEHITTSDAAQFVTEAPANVGATITAQHLLYNRNHMLVGGIRPHFYCLPILKRNTHQVALLDAATSGNPKFFLGTDSAPHARHAKEAACGCAGCYTAYAAIEMYAEAFEQRNALDKLEGFASLHGPAFYGLPANTDTITLVREEWTAPESLPFGEQTVVPLRAGEKLRWRLLEKNA.

Positions 14 and 16 each coordinate Zn(2+). Substrate is bound by residues 16-18 (HLR) and asparagine 42. Residues lysine 100, histidine 137, and histidine 175 each coordinate Zn(2+). Lysine 100 bears the N6-carboxylysine mark. Histidine 137 contacts substrate. Leucine 220 contributes to the substrate binding site. A Zn(2+)-binding site is contributed by aspartate 248. Aspartate 248 is a catalytic residue. The substrate site is built by histidine 252 and alanine 264.

It belongs to the metallo-dependent hydrolases superfamily. DHOase family. Class II DHOase subfamily. As to quaternary structure, homodimer. It depends on Zn(2+) as a cofactor.

It carries out the reaction (S)-dihydroorotate + H2O = N-carbamoyl-L-aspartate + H(+). Its pathway is pyrimidine metabolism; UMP biosynthesis via de novo pathway; (S)-dihydroorotate from bicarbonate: step 3/3. Catalyzes the reversible cyclization of carbamoyl aspartate to dihydroorotate. The sequence is that of Dihydroorotase from Pseudomonas putida (strain ATCC 700007 / DSM 6899 / JCM 31910 / BCRC 17059 / LMG 24140 / F1).